A 160-amino-acid chain; its full sequence is RTX-II toxin-activating lysine-acyltransferase ApxIIC (160 aa).

Active-site residues include His-23 and Asp-92.

This sequence belongs to the RTX toxin acyltransferase family. Homodimer.

It localises to the cytoplasm. It catalyses the reaction a fatty acyl-[ACP] + L-lysyl-[protein] = N(6)-(fatty acyl)-L-lysyl-[protein] + holo-[ACP] + H(+). Protein-lysine acyltransferase that catalyzes fatty acylation of the protoxin, thereby converting it to the active toxin. The polypeptide is RTX-II toxin-activating lysine-acyltransferase ApxIIC (apxIIC) (Actinobacillus pleuropneumoniae (Haemophilus pleuropneumoniae)).